The chain runs to 535 residues: Probable deoxycholate-binding periplasmic protein YgiS (535 aa).

The N-terminal stretch at 1-20 (MYTRNLLWLVSLVSAAPLYA) is a signal peptide.

The protein belongs to the bacterial solute-binding protein 5 family.

It is found in the periplasm. Functionally, probably part of a deoxycholate transport system. Its expression in the presence of deoxycholate in a ygiS deletion mutant increases intracellular deoxycholate levels and decreases cell growth; higher expression in the presence of deoxycholate inhibits cell growth completely. Bile acid detergents such as deoxycholate are important for host defense against bacterial growth in the gall bladder and duodenum. This chain is Probable deoxycholate-binding periplasmic protein YgiS (ygiS), found in Escherichia coli (strain K12).